The primary structure comprises 566 residues: Arginine--tRNA ligase (566 aa).

Positions 120-130 (PNIAKPFHVGH) match the 'HIGH' region motif.

Belongs to the class-I aminoacyl-tRNA synthetase family. As to quaternary structure, monomer.

The protein resides in the cytoplasm. The catalysed reaction is tRNA(Arg) + L-arginine + ATP = L-arginyl-tRNA(Arg) + AMP + diphosphate. The protein is Arginine--tRNA ligase of Clostridium kluyveri (strain NBRC 12016).